Consider the following 671-residue polypeptide: DNA ligase (671 aa).

Residues 32-36, 81-82, and Glu113 contribute to the NAD(+) site; these read DAEYD and SL. The active-site N6-AMP-lysine intermediate is the Lys115. Positions 136, 173, 290, and 314 each coordinate NAD(+). Zn(2+) contacts are provided by Cys408, Cys411, Cys426, and Cys432. The BRCT domain maps to 593-671; sequence EIDSPFAGKT…EAEMLRLLGS (79 aa).

It belongs to the NAD-dependent DNA ligase family. LigA subfamily. Mg(2+) serves as cofactor. It depends on Mn(2+) as a cofactor.

The enzyme catalyses NAD(+) + (deoxyribonucleotide)n-3'-hydroxyl + 5'-phospho-(deoxyribonucleotide)m = (deoxyribonucleotide)n+m + AMP + beta-nicotinamide D-nucleotide.. Functionally, DNA ligase that catalyzes the formation of phosphodiester linkages between 5'-phosphoryl and 3'-hydroxyl groups in double-stranded DNA using NAD as a coenzyme and as the energy source for the reaction. It is essential for DNA replication and repair of damaged DNA. The chain is DNA ligase from Escherichia coli O9:H4 (strain HS).